The chain runs to 192 residues: Xanthine phosphoribosyltransferase (192 aa).

Xanthine contacts are provided by leucine 20 and asparagine 27. A 5-phospho-alpha-D-ribose 1-diphosphate-binding site is contributed by 128 to 132 (ANGDA). Residue lysine 156 coordinates xanthine.

The protein belongs to the purine/pyrimidine phosphoribosyltransferase family. Xpt subfamily. As to quaternary structure, homodimer.

The protein localises to the cytoplasm. The catalysed reaction is XMP + diphosphate = xanthine + 5-phospho-alpha-D-ribose 1-diphosphate. It functions in the pathway purine metabolism; XMP biosynthesis via salvage pathway; XMP from xanthine: step 1/1. Converts the preformed base xanthine, a product of nucleic acid breakdown, to xanthosine 5'-monophosphate (XMP), so it can be reused for RNA or DNA synthesis. In Staphylococcus aureus (strain bovine RF122 / ET3-1), this protein is Xanthine phosphoribosyltransferase.